The following is a 92-amino-acid chain: Small ribosomal subunit protein uS19 (92 aa).

The protein belongs to the universal ribosomal protein uS19 family.

In terms of biological role, protein S19 forms a complex with S13 that binds strongly to the 16S ribosomal RNA. This Yersinia pestis (strain Pestoides F) protein is Small ribosomal subunit protein uS19.